The primary structure comprises 85 residues: Cell division topological specificity factor (85 aa).

This sequence belongs to the MinE family.

Functionally, prevents the cell division inhibition by proteins MinC and MinD at internal division sites while permitting inhibition at polar sites. This ensures cell division at the proper site by restricting the formation of a division septum at the midpoint of the long axis of the cell. The polypeptide is Cell division topological specificity factor (Chromobacterium violaceum (strain ATCC 12472 / DSM 30191 / JCM 1249 / CCUG 213 / NBRC 12614 / NCIMB 9131 / NCTC 9757 / MK)).